The sequence spans 424 residues: Histidine--tRNA ligase (424 aa).

The protein belongs to the class-II aminoacyl-tRNA synthetase family. As to quaternary structure, homodimer.

It localises to the cytoplasm. It carries out the reaction tRNA(His) + L-histidine + ATP = L-histidyl-tRNA(His) + AMP + diphosphate + H(+). This Pectobacterium carotovorum subsp. carotovorum (strain PC1) protein is Histidine--tRNA ligase.